A 274-amino-acid polypeptide reads, in one-letter code: Diaminopimelate epimerase (274 aa).

Substrate-binding residues include Asn-11, Gln-44, and Asn-64. Catalysis depends on Cys-73, which acts as the Proton donor. Substrate contacts are provided by residues 74–75, Asn-157, Asn-190, and 208–209; these read GN and ER. Cys-217 acts as the Proton acceptor in catalysis. A substrate-binding site is contributed by 218-219; sequence GS.

This sequence belongs to the diaminopimelate epimerase family. In terms of assembly, homodimer.

It localises to the cytoplasm. The catalysed reaction is (2S,6S)-2,6-diaminopimelate = meso-2,6-diaminopimelate. It functions in the pathway amino-acid biosynthesis; L-lysine biosynthesis via DAP pathway; DL-2,6-diaminopimelate from LL-2,6-diaminopimelate: step 1/1. Catalyzes the stereoinversion of LL-2,6-diaminopimelate (L,L-DAP) to meso-diaminopimelate (meso-DAP), a precursor of L-lysine and an essential component of the bacterial peptidoglycan. This chain is Diaminopimelate epimerase, found in Mannheimia succiniciproducens (strain KCTC 0769BP / MBEL55E).